A 678-amino-acid chain; its full sequence is Probable antibacterial peptide polyprotein (678 aa).

A run of 14 repeats spans residues 1–67 (MRSP…PEVR), 68–114 (ERRS…PEVR), 115–161 (ERRS…PEVR), 162–208 (ERRS…PEVR), 209–255 (ERRS…PEVR), 256–302 (ERGS…PEVR), 303–349 (ERRS…PEVR), 350–396 (ERRS…PEVR), 397–443 (ERRS…PEVR), 444–490 (ERRS…PEVR), 491–537 (ERRS…PEVR), 538–584 (ERRS…PEVR), 585–631 (ERRS…PEVR), and 632–678 (ERRS…PEVR). Residues 1–678 (MRSPRVIHLA…SEGVVLPEVR (678 aa)) form a 14 X approximate tandem repeats region. O-linked (GalNAc...) threonine glycosylation occurs at threonine 32. 2 disordered regions span residues 58 to 97 (SEAE…DASL) and 113 to 678 (VRER…PEVR). The span at 64 to 73 (PEVRERRSPV) shows a compositional bias: basic and acidic residues. O-linked (GalNAc...) threonine glycosylation is found at threonine 83 and threonine 130. The span at 145 to 157 (ESELSPLSEAEVL) shows a compositional bias: low complexity. Basic and acidic residues predominate over residues 158 to 167 (PEVRERRSPV). An O-linked (GalNAc...) threonine glycan is attached at threonine 177. The segment covering 188-204 (VASLESELSPLSEAEVL) has biased composition (low complexity). The segment covering 205 to 214 (PEVRERRSPV) has biased composition (basic and acidic residues). 2 O-linked (GalNAc...) threonine glycosylation sites follow: threonine 224 and threonine 271. Positions 299–308 (PEVRERRSPV) are enriched in basic and acidic residues. An O-linked (GalNAc...) threonine glycan is attached at threonine 318. Low complexity predominate over residues 333 to 345 (ESELSPLSEAEVL). Positions 346-355 (PEVRERRSPV) are enriched in basic and acidic residues. Residue threonine 365 is glycosylated (O-linked (GalNAc...) threonine). Positions 380 to 392 (ESELSPLSEAEVL) are enriched in low complexity. Positions 393–402 (PEVRERRSPV) are enriched in basic and acidic residues. O-linked (GalNAc...) threonine glycosylation occurs at threonine 412. The span at 427-439 (ESELSPLSEAEVL) shows a compositional bias: low complexity. The segment covering 440 to 449 (PEVRERRSPV) has biased composition (basic and acidic residues). The O-linked (GalNAc...) threonine glycan is linked to threonine 459. The segment covering 474–486 (ESELSPLSEAEVL) has biased composition (low complexity). Over residues 487 to 496 (PEVRERRSPV) the composition is skewed to basic and acidic residues. Residue threonine 506 is glycosylated (O-linked (GalNAc...) threonine). Low complexity predominate over residues 521 to 533 (ESELSPSSEAEVL). The segment covering 534 to 543 (PEVRERRSPV) has biased composition (basic and acidic residues). O-linked (GalNAc...) threonine glycosylation is present at threonine 553. Positions 568 to 580 (ESELSPLSEAEVL) are enriched in low complexity. Basic and acidic residues predominate over residues 581–590 (PEVRERRSPV). Threonine 600 is a glycosylation site (O-linked (GalNAc...) threonine). Over residues 615–627 (ESELSPLSEAEGL) the composition is skewed to low complexity. Threonine 647 is a glycosylation site (O-linked (GalNAc...) threonine).

The protein resides in the secreted. In terms of biological role, has antibacterial activity in vitro. This Riptortus clavatus (Bean bug) protein is Probable antibacterial peptide polyprotein.